The primary structure comprises 341 residues: DNA-directed RNA polymerase subunit alpha (341 aa).

An alpha N-terminal domain (alpha-NTD) region spans residues 1 to 226; it reads MLIAQRPTIT…ELFGLVRELN (226 aa). Positions 241–341 are alpha C-terminal domain (alpha-CTD); it reads AALAADLALP…DQRYIETEQL (101 aa).

It belongs to the RNA polymerase alpha chain family. As to quaternary structure, homodimer. The RNAP catalytic core consists of 2 alpha, 1 beta, 1 beta' and 1 omega subunit. When a sigma factor is associated with the core the holoenzyme is formed, which can initiate transcription.

It carries out the reaction RNA(n) + a ribonucleoside 5'-triphosphate = RNA(n+1) + diphosphate. Its function is as follows. DNA-dependent RNA polymerase catalyzes the transcription of DNA into RNA using the four ribonucleoside triphosphates as substrates. This is DNA-directed RNA polymerase subunit alpha from Acidothermus cellulolyticus (strain ATCC 43068 / DSM 8971 / 11B).